Consider the following 354-residue polypeptide: Ferrochelatase (354 aa).

Fe cation is bound by residues His191 and Glu271.

This sequence belongs to the ferrochelatase family.

The protein resides in the cytoplasm. The catalysed reaction is heme b + 2 H(+) = protoporphyrin IX + Fe(2+). The protein operates within porphyrin-containing compound metabolism; protoheme biosynthesis; protoheme from protoporphyrin-IX: step 1/1. In terms of biological role, catalyzes the ferrous insertion into protoporphyrin IX. This chain is Ferrochelatase, found in Rickettsia bellii (strain OSU 85-389).